We begin with the raw amino-acid sequence, 778 residues long: Serine/threonine-protein kinase BRSK1 (778 aa).

Gly residues predominate over residues 1–12 (MSSGSKEGGGGS). The interval 1 to 29 (MSSGSKEGGGGSPAYHLPHPHPHPPQHAQ) is disordered. The Protein kinase domain maps to 34–285 (YRLEKTLGKG…LEQIQKHPWY (252 aa)). ATP is bound by residues 40 to 48 (LGKGQTGLV) and lysine 63. Aspartate 156 acts as the Proton acceptor in catalysis. At threonine 189 the chain carries Phosphothreonine; by LKB1. The UBA domain occupies 314–356 (ELDPDVLESMASLGCFRDRERLHRELRSEEENQEKMIYYLLLD). Over residues 362 to 383 (PSCEDQDLPPRNDVDPPRKRVD) the composition is skewed to basic and acidic residues. The disordered stretch occupies residues 362 to 548 (PSCEDQDLPP…SPGGGVGGAA (187 aa)). Phosphoserine is present on residues serine 399, serine 443, serine 447, and serine 450. Residues 430–457 (SRSVSGASTGLSSSPLSSPRSPVFSFSP) are compositionally biased toward low complexity. An omega-N-methylarginine mark is found at arginine 466, arginine 481, arginine 484, and arginine 498. A compositionally biased stretch (pro residues) spans 491–508 (QPPPPSARSTPLPGPPGS). The residue at position 508 (serine 508) is a Phosphoserine. Over residues 509 to 533 (PRSSGGTPLHSPLHTPRASPTGTPG) the composition is skewed to low complexity. Residue arginine 525 is modified to Omega-N-methylarginine. Threonine 529 and threonine 535 each carry phosphothreonine. Omega-N-methylarginine is present on arginine 550. A disordered region spans residues 560-588 (FLGSPRFHRRKMQVPTAEEMSSLTPESSP). Residue threonine 583 is modified to Phosphothreonine. Serine 586, serine 587, and serine 601 each carry phosphoserine. Residues 719–778 (QPSVQALADEKNGAQTRPAGTPPRSLQPPPGRSDPDLSSSPRRGPPKDKKLLATNGTPLP) form a disordered region.

The protein belongs to the protein kinase superfamily. CAMK Ser/Thr protein kinase family. SNF1 subfamily. The cofactor is Mg(2+). Phosphorylated at Thr-189 by STK11/LKB1 in complex with STE20-related adapter-alpha (STRADA) pseudo kinase and CAB39. Not phosphorylated at Thr-189 by CaMKK2. In contrast, it is phosphorylated and activated by CaMKK1. May be inactivated via dephosphorylation of Thr-189 by PP2C. Present in the gray matter of the brain and spinal cord (at protein level). Expressed in the nervous system, distributed within the brain and spinal cord of embryonic and postnatal animals.

It localises to the cytoplasm. Its subcellular location is the nucleus. The protein resides in the cytoskeleton. The protein localises to the microtubule organizing center. It is found in the centrosome. It localises to the synapse. Its subcellular location is the presynaptic active zone. The protein resides in the cytoplasmic vesicle. The protein localises to the secretory vesicle. It is found in the synaptic vesicle. The enzyme catalyses L-seryl-[protein] + ATP = O-phospho-L-seryl-[protein] + ADP + H(+). It catalyses the reaction L-threonyl-[protein] + ATP = O-phospho-L-threonyl-[protein] + ADP + H(+). The catalysed reaction is L-seryl-[tau protein] + ATP = O-phospho-L-seryl-[tau protein] + ADP + H(+). It carries out the reaction L-threonyl-[tau protein] + ATP = O-phospho-L-threonyl-[tau protein] + ADP + H(+). With respect to regulation, activated by phosphorylation on Thr-189 by STK11/LKB1. Its function is as follows. Serine/threonine-protein kinase that plays a key role in polarization of neurons and centrosome duplication. Phosphorylates CDC25B, CDC25C, MAPT/TAU, RIMS1, TUBG1, TUBG2 and WEE1. Following phosphorylation and activation by STK11/LKB1, acts as a key regulator of polarization of cortical neurons, probably by mediating phosphorylation of microtubule-associated proteins such as MAPT/TAU at 'Thr-504' and 'Ser-554'. Also regulates neuron polarization by mediating phosphorylation of WEE1 at 'Ser-642' in postmitotic neurons, leading to down-regulate WEE1 activity in polarized neurons. In neurons, localizes to synaptic vesicles and plays a role in neurotransmitter release, possibly by phosphorylating RIMS1. Also acts as a positive regulator of centrosome duplication by mediating phosphorylation of gamma-tubulin (TUBG1 and TUBG2) at 'Ser-131', leading to translocation of gamma-tubulin and its associated proteins to the centrosome. Involved in the UV-induced DNA damage checkpoint response, probably by inhibiting CDK1 activity through phosphorylation and activation of WEE1, and inhibition of CDC25B and CDC25C. This Mus musculus (Mouse) protein is Serine/threonine-protein kinase BRSK1 (Brsk1).